The chain runs to 175 residues: Diacylglycerol kinase (175 aa).

Transmembrane regions (helical) follow at residues 55–75 (VAPNLLVSFRYAWAGVSYAFA) and 96–116 (LLHLEAIAVAVLALTSCLVMI). Glutamate 118 acts as the Proton acceptor in catalysis. Residue glutamate 125 coordinates a divalent metal cation. A helical membrane pass occupies residues 151–171 (VLLAAIAAVIVGGCLLLPPLL).

Belongs to the bacterial diacylglycerol kinase family. Mg(2+) serves as cofactor.

It is found in the cell membrane. The catalysed reaction is a 1,2-diacyl-sn-glycerol + ATP = a 1,2-diacyl-sn-glycero-3-phosphate + ADP + H(+). Its function is as follows. Catalyzes the ATP-dependent phosphorylation of sn-l,2-diacylglycerol (DAG) to phosphatidic acid. In Synechocystis sp. (strain ATCC 27184 / PCC 6803 / Kazusa), this protein is Diacylglycerol kinase (dgkA).